The chain runs to 312 residues: Acetyl-coenzyme A carboxylase carboxyl transferase subunit alpha (312 aa).

Residues 36 to 286 (RLEKEVKSIY…KEYFLDALRT (251 aa)) form the CoA carboxyltransferase C-terminal domain.

This sequence belongs to the AccA family. In terms of assembly, acetyl-CoA carboxylase is a heterohexamer composed of biotin carboxyl carrier protein (AccB), biotin carboxylase (AccC) and two subunits each of ACCase subunit alpha (AccA) and ACCase subunit beta (AccD).

The protein localises to the cytoplasm. It catalyses the reaction N(6)-carboxybiotinyl-L-lysyl-[protein] + acetyl-CoA = N(6)-biotinyl-L-lysyl-[protein] + malonyl-CoA. It participates in lipid metabolism; malonyl-CoA biosynthesis; malonyl-CoA from acetyl-CoA: step 1/1. Functionally, component of the acetyl coenzyme A carboxylase (ACC) complex. First, biotin carboxylase catalyzes the carboxylation of biotin on its carrier protein (BCCP) and then the CO(2) group is transferred by the carboxyltransferase to acetyl-CoA to form malonyl-CoA. The chain is Acetyl-coenzyme A carboxylase carboxyl transferase subunit alpha from Helicobacter pylori (strain P12).